The primary structure comprises 100 residues: Urease subunit gamma (100 aa).

Belongs to the urease gamma subunit family. As to quaternary structure, heterotrimer of UreA (gamma), UreB (beta) and UreC (alpha) subunits. Three heterotrimers associate to form the active enzyme.

It localises to the cytoplasm. It carries out the reaction urea + 2 H2O + H(+) = hydrogencarbonate + 2 NH4(+). The protein operates within nitrogen metabolism; urea degradation; CO(2) and NH(3) from urea (urease route): step 1/1. The chain is Urease subunit gamma from Synechococcus sp. (strain WH7805).